The following is a 94-amino-acid chain: CRISPR-associated endoribonuclease Cas2 (94 aa).

Aspartate 11 lines the Mg(2+) pocket.

This sequence belongs to the CRISPR-associated endoribonuclease Cas2 protein family. As to quaternary structure, homodimer, forms a heterotetramer with a Cas1 homodimer. Mg(2+) serves as cofactor.

Functionally, CRISPR (clustered regularly interspaced short palindromic repeat), is an adaptive immune system that provides protection against mobile genetic elements (viruses, transposable elements and conjugative plasmids). CRISPR clusters contain sequences complementary to antecedent mobile elements and target invading nucleic acids. CRISPR clusters are transcribed and processed into CRISPR RNA (crRNA). Functions as a ssRNA-specific endoribonuclease. Involved in the integration of spacer DNA into the CRISPR cassette. In Allochromatium vinosum (strain ATCC 17899 / DSM 180 / NBRC 103801 / NCIMB 10441 / D) (Chromatium vinosum), this protein is CRISPR-associated endoribonuclease Cas2.